A 109-amino-acid polypeptide reads, in one-letter code: COX assembly mitochondrial protein 2 (109 aa).

The CHCH domain maps to 10-54; it reads FHSCLDFINALDKCHQKEYYKRIFGLCNNEKDALNKCLKEASLNN. 2 consecutive short sequence motifs (cx9C motif) follow at residues 13–23 and 36–46; these read CLDFINALDKC and CNNEKDALNKC. 2 cysteine pairs are disulfide-bonded: C13-C46 and C23-C36.

Belongs to the CMC family. Interacts with CMC1.

The protein localises to the mitochondrion inner membrane. It localises to the mitochondrion intermembrane space. In terms of biological role, required for mitochondrial cytochrome c oxidase (COX) assembly and respiration. May be involved in copper trafficking and distribution to mitochondrial COX and SOD1. This chain is COX assembly mitochondrial protein 2 (CMC2), found in Saccharomyces cerevisiae (strain ATCC 204508 / S288c) (Baker's yeast).